The chain runs to 336 residues: MTTNRKDEHILYALEQKSSYNSFDEVELIHSSLPLYNLDEIDLSTEFAGRKWDFPFYINAMTGGSNKGREINQKLAQVAETCGILFVTGSYSAALKNPTDDSFSVKSSHPNLLLGTNIGLDKPVELGLQTVEEMNPVLLQVHVNVMQELLMPEGERKFRSWQSHLADYSKQIPVPIVLKEVGFGMDAKTIERAYEFGVRTVDLSGRGGTSFAYIENRRSGQRDYLNQWGQSTMQALLNAQEWKDKVELLVSGGVRNPLDMIKCLVFGAKAVGLSRTVLELVETYTVEEVIGIVQGWKADLRLIMCSLNCATIADLQKVDYLLYGKLKEANDQMKKA.

5–6 (RK) contributes to the substrate binding site. FMN contacts are provided by residues 60 to 62 (AMT), S90, and N117. Residue Q147 participates in substrate binding. E148 lines the Mg(2+) pocket. Residues K179, S204, T209, 253-255 (GVR), and 274-275 (SR) contribute to the FMN site.

It belongs to the IPP isomerase type 2 family. As to quaternary structure, homooctamer. Dimer of tetramers. FMN serves as cofactor. NADPH is required as a cofactor. The cofactor is Mg(2+).

The protein resides in the cytoplasm. The enzyme catalyses isopentenyl diphosphate = dimethylallyl diphosphate. Involved in the biosynthesis of isoprenoids. Catalyzes the 1,3-allylic rearrangement of the homoallylic substrate isopentenyl (IPP) to its allylic isomer, dimethylallyl diphosphate (DMAPP). The protein is Isopentenyl-diphosphate delta-isomerase of Streptococcus pneumoniae (strain ATCC BAA-255 / R6).